The following is a 452-amino-acid chain: Phosphoglucosamine mutase (452 aa).

The active-site Phosphoserine intermediate is the S108. Mg(2+) contacts are provided by S108, D247, D249, and D251. S108 carries the post-translational modification Phosphoserine.

The protein belongs to the phosphohexose mutase family. It depends on Mg(2+) as a cofactor. Post-translationally, activated by phosphorylation.

The catalysed reaction is alpha-D-glucosamine 1-phosphate = D-glucosamine 6-phosphate. In terms of biological role, catalyzes the conversion of glucosamine-6-phosphate to glucosamine-1-phosphate. The chain is Phosphoglucosamine mutase from Burkholderia mallei (strain NCTC 10247).